A 1419-amino-acid chain; its full sequence is L-2-aminoadipate reductase (1419 aa).

In terms of domain architecture, Carrier spans 880–956 (ETLTATERDI…GLAKEIERMK (77 aa)). Ser-916 is modified (O-(pantetheine 4'-phosphoryl)serine).

This sequence belongs to the ATP-dependent AMP-binding enzyme family. It depends on pantetheine 4'-phosphate as a cofactor.

The protein localises to the cytoplasm. It carries out the reaction (S)-2-amino-6-oxohexanoate + NADP(+) + H2O = L-2-aminoadipate + NADPH + 2 H(+). The enzyme catalyses (S)-2-amino-6-oxohexanoate + NAD(+) + H2O = L-2-aminoadipate + NADH + 2 H(+). It catalyses the reaction (S)-2-amino-6-oxohexanoate + AMP + diphosphate + NADP(+) = L-2-aminoadipate + ATP + NADPH + H(+). It participates in amino-acid biosynthesis; L-lysine biosynthesis via AAA pathway; L-lysine from L-alpha-aminoadipate (fungal route): step 1/3. Its function is as follows. Catalyzes the activation of alpha-aminoadipate by ATP-dependent adenylation and the reduction of activated alpha-aminoadipate by NADPH. The activated alpha-aminoadipate is bound to the phosphopantheinyl group of the enzyme itself before it is reduced to (S)-2-amino-6-oxohexanoate. In Schizosaccharomyces pombe (strain 972 / ATCC 24843) (Fission yeast), this protein is L-2-aminoadipate reductase (lys1).